Reading from the N-terminus, the 143-residue chain is Sarcoplasmic/endoplasmic reticulum calcium ATPase (143 aa).

Belongs to the cation transport ATPase (P-type) (TC 3.A.3) family. Type IIA subfamily.

The protein resides in the endoplasmic reticulum membrane. Its subcellular location is the sarcoplasmic reticulum membrane. It carries out the reaction Ca(2+)(in) + ATP + H2O = Ca(2+)(out) + ADP + phosphate + H(+). This magnesium-dependent enzyme catalyzes the hydrolysis of ATP coupled with the transport of calcium. Transports calcium ions from the cytosol into the sarcoplasmic/endoplasmic reticulum lumen. Contributes to calcium sequestration involved in muscular excitation/contraction. This chain is Sarcoplasmic/endoplasmic reticulum calcium ATPase, found in Chionoecetes opilio (Atlantic snow crab).